Here is a 277-residue protein sequence, read N- to C-terminus: Myelin proteolipid protein (277 aa).

The Cytoplasmic segment spans residues 1 to 10 (MGLLECCARC). S-palmitoyl cysteine attachment occurs at residues C6, C7, and C10. The helical transmembrane segment at 11–36 (LVGAPFASLVATGLCFFGVALFCGCG) threads the bilayer. Residues 37-59 (HEALTGTEKLIETYFSKNYQDYE) are Extracellular-facing. The chain crosses the membrane as a helical span at residues 60 to 88 (YLINVIHAFQYVIYGTASFFFLYGALLLA). Residues 89-151 (EGFYTTGAVR…LGKWLGHPDK (63 aa)) lie on the Cytoplasmic side of the membrane. C109 carries the S-palmitoyl cysteine lipid modification. S114 carries the post-translational modification Phosphoserine. Phosphothreonine occurs at positions 116 and 118. S-palmitoyl cysteine attachment occurs at residues C139 and C141. A helical transmembrane segment spans residues 152-178 (FVGITYALTVVWLLVFACSAVPVYIYF). At 179-238 (NTWTTCQSIAFPSKTSASIGTLCADARMYGVLPWNAFPGKVCGSNLLSICKTAEFQMTFH) the chain is on the extracellular side. 2 disulfides stabilise this stretch: C184/C228 and C201/C220. T199 carries O-palmitoyl threonine lipidation. Residues 239 to 268 (LFIAAFVGAAATLVSLLTFMIAATYNFAVL) form a helical membrane-spanning segment. At 269–277 (KLMGRGTKF) the chain is on the cytoplasmic side.

Belongs to the myelin proteolipid protein family. As to quaternary structure, interacts with MAL.

The protein resides in the cell membrane. It localises to the myelin membrane. Its function is as follows. This is the major myelin protein from the central nervous system. It plays an important role in the formation or maintenance of the multilamellar structure of myelin. The chain is Myelin proteolipid protein (PLP1) from Oryctolagus cuniculus (Rabbit).